We begin with the raw amino-acid sequence, 618 residues long: Dihydroxy-acid dehydratase (618 aa).

Aspartate 81 is a Mg(2+) binding site. Cysteine 122 is a binding site for [2Fe-2S] cluster. 2 residues coordinate Mg(2+): aspartate 123 and lysine 124. An N6-carboxylysine modification is found at lysine 124. A [2Fe-2S] cluster-binding site is contributed by cysteine 199. A Mg(2+)-binding site is contributed by glutamate 495. Serine 521 serves as the catalytic Proton acceptor.

It belongs to the IlvD/Edd family. As to quaternary structure, homodimer. [2Fe-2S] cluster is required as a cofactor. Requires Mg(2+) as cofactor.

It carries out the reaction (2R)-2,3-dihydroxy-3-methylbutanoate = 3-methyl-2-oxobutanoate + H2O. The enzyme catalyses (2R,3R)-2,3-dihydroxy-3-methylpentanoate = (S)-3-methyl-2-oxopentanoate + H2O. Its pathway is amino-acid biosynthesis; L-isoleucine biosynthesis; L-isoleucine from 2-oxobutanoate: step 3/4. It functions in the pathway amino-acid biosynthesis; L-valine biosynthesis; L-valine from pyruvate: step 3/4. Functionally, functions in the biosynthesis of branched-chain amino acids. Catalyzes the dehydration of (2R,3R)-2,3-dihydroxy-3-methylpentanoate (2,3-dihydroxy-3-methylvalerate) into 2-oxo-3-methylpentanoate (2-oxo-3-methylvalerate) and of (2R)-2,3-dihydroxy-3-methylbutanoate (2,3-dihydroxyisovalerate) into 2-oxo-3-methylbutanoate (2-oxoisovalerate), the penultimate precursor to L-isoleucine and L-valine, respectively. The protein is Dihydroxy-acid dehydratase of Blochmanniella floridana.